The chain runs to 859 residues: Rod cGMP-specific 3',5'-cyclic phosphodiesterase subunit alpha (859 aa).

Position 2 is an N-acetylglycine (G2). GAF domains follow at residues 73–222 and 254–431; these read QAEK…NLIM and DIER…GWSV. The region spanning 483-816 is the PDEase domain; the sequence is EEEELAEILQ…KEWKALADEY (334 aa). The Proton donor role is filled by H559. A divalent metal cation contacts are provided by H563, H599, D600, and D720. Residues 821-859 form a disordered region; the sequence is KGLEEEKQKQQAANQAAAGSQHGGKQPGGGPASKSCCVQ. The segment covering 830 to 840 has biased composition (low complexity); sequence QQAANQAAAGS. A compositionally biased stretch (gly residues) spans 841 to 851; the sequence is QHGGKQPGGGP. C856 bears the Cysteine methyl ester mark. C856 carries S-farnesyl cysteine lipidation. Residues 857–859 constitute a propeptide, removed in mature form; that stretch reads CVQ.

The protein belongs to the cyclic nucleotide phosphodiesterase family. In terms of assembly, oligomer composed of two catalytic chains (alpha and beta), an inhibitory chain (gamma) and the delta chain. It depends on a divalent metal cation as a cofactor.

It is found in the cell membrane. The protein resides in the cell projection. It localises to the cilium. Its subcellular location is the photoreceptor outer segment. It carries out the reaction 3',5'-cyclic GMP + H2O = GMP + H(+). Functionally, rod-specific cGMP phosphodiesterase that catalyzes the hydrolysis of 3',5'-cyclic GMP. This protein participates in processes of transmission and amplification of the visual signal. This Bos taurus (Bovine) protein is Rod cGMP-specific 3',5'-cyclic phosphodiesterase subunit alpha.